The following is a 212-amino-acid chain: Dephospho-CoA kinase (212 aa).

Residues 8–212 (LVGVTGGLGS…QLLQQAMLRR (205 aa)) enclose the DPCK domain. 16–21 (GSGKSM) contacts ATP.

Belongs to the CoaE family.

The protein resides in the cytoplasm. The catalysed reaction is 3'-dephospho-CoA + ATP = ADP + CoA + H(+). Its pathway is cofactor biosynthesis; coenzyme A biosynthesis; CoA from (R)-pantothenate: step 5/5. In terms of biological role, catalyzes the phosphorylation of the 3'-hydroxyl group of dephosphocoenzyme A to form coenzyme A. This chain is Dephospho-CoA kinase, found in Chlorobium chlorochromatii (strain CaD3).